Reading from the N-terminus, the 479-residue chain is Adenosylhomocysteinase (479 aa).

Substrate contacts are provided by T56, D133, and E199. 200–202 lines the NAD(+) pocket; that stretch reads TTT. 2 residues coordinate substrate: K229 and D233. NAD(+) contacts are provided by residues N234, 263 to 268, E286, N321, 342 to 344, and N390; these read GYGDVG and IGH.

This sequence belongs to the adenosylhomocysteinase family. As to quaternary structure, homotetramer. It depends on NAD(+) as a cofactor.

The enzyme catalyses S-adenosyl-L-homocysteine + H2O = L-homocysteine + adenosine. It functions in the pathway amino-acid biosynthesis; L-homocysteine biosynthesis; L-homocysteine from S-adenosyl-L-homocysteine: step 1/1. Adenosylhomocysteine is a competitive inhibitor of S-adenosyl-L-methionine-dependent methyl transferase reactions; therefore adenosylhomocysteinase may play a key role in the control of methylations via regulation of the intracellular concentration of adenosylhomocysteine. The polypeptide is Adenosylhomocysteinase (Plasmodium yoelii yoelii).